We begin with the raw amino-acid sequence, 416 residues long: Glutamyl-tRNA reductase (416 aa).

Substrate is bound by residues 49 to 52 (TCNR), Ser105, 110 to 112 (EPQ), and Gln116. Residue Cys50 is the Nucleophile of the active site. 185–190 (GAGETI) is a binding site for NADP(+).

Belongs to the glutamyl-tRNA reductase family. Homodimer.

The enzyme catalyses (S)-4-amino-5-oxopentanoate + tRNA(Glu) + NADP(+) = L-glutamyl-tRNA(Glu) + NADPH + H(+). Its pathway is porphyrin-containing compound metabolism; protoporphyrin-IX biosynthesis; 5-aminolevulinate from L-glutamyl-tRNA(Glu): step 1/2. In terms of biological role, catalyzes the NADPH-dependent reduction of glutamyl-tRNA(Glu) to glutamate 1-semialdehyde (GSA). The sequence is that of Glutamyl-tRNA reductase from Shewanella putrefaciens (strain CN-32 / ATCC BAA-453).